A 118-amino-acid chain; its full sequence is uncharacterized protein (118 aa).

Helical transmembrane passes span 12-32 (IISL…FATF), 39-59 (LMPH…SLFI), 63-83 (IIGY…CPTI), and 98-118 (SAHL…VILF).

It localises to the cell membrane. This is an uncharacterized protein from Methanocaldococcus jannaschii (strain ATCC 43067 / DSM 2661 / JAL-1 / JCM 10045 / NBRC 100440) (Methanococcus jannaschii).